A 101-amino-acid chain; its full sequence is Urease subunit beta (101 aa).

The protein belongs to the urease beta subunit family. In terms of assembly, heterotrimer of UreA (gamma), UreB (beta) and UreC (alpha) subunits. Three heterotrimers associate to form the active enzyme.

Its subcellular location is the cytoplasm. It carries out the reaction urea + 2 H2O + H(+) = hydrogencarbonate + 2 NH4(+). It functions in the pathway nitrogen metabolism; urea degradation; CO(2) and NH(3) from urea (urease route): step 1/1. The protein is Urease subunit beta of Leptothrix cholodnii (strain ATCC 51168 / LMG 8142 / SP-6) (Leptothrix discophora (strain SP-6)).